A 1312-amino-acid polypeptide reads, in one-letter code: DNA repair protein RAD50 (1312 aa).

10 residues coordinate ATP: Arg-13, Asn-36, Gly-37, Gly-39, Lys-40, Thr-41, Thr-42, Ile-65, Asp-67, and Gln-158. A Mg(2+)-binding site is contributed by Thr-41. Gln-158 is a Mg(2+) binding site. 2 coiled-coil regions span residues 185 to 347 (TKAL…LIRR) and 403 to 558 (QDLT…LQND). A Phosphoserine modification is found at Ser-469. Thr-568 carries the post-translational modification Phosphothreonine. A coiled-coil region spans residues 640-678 (DCTIDEYNDVLEETELSYKTALENLKMHQTTLEFNRKAL). The Zinc-hook domain maps to 640 to 741 (DCTIDEYNDV…SLRLLEKHII (102 aa)). The Zn(2+) site is built by Cys-687 and Cys-690. Coiled coils occupy residues 712-741 (DANFEKTLKDTVQNEKEYLHSLRLLEKHII) and 787-1108 (LAES…DIEK).

This sequence belongs to the SMC family. RAD50 subfamily. Component of the MRN complex composed of two heterodimers RAD50 and MRE11 associated with a single XRS2. The MRN complexes dimerize on DNA to form joined MRN-MRN oligomers required for DNA double-strand break repair. Zn(2+) is required as a cofactor.

The protein localises to the nucleus. It is found in the chromosome. It carries out the reaction ATP + H2O = ADP + phosphate + H(+). Its function is as follows. Component of the MRN complex, which plays a central role in double-strand break (DSB) repair, DNA recombination, maintenance of telomere integrity and meiosis. The MRN complex is involved in the repair of DNA double-strand breaks (DSBs) via homologous recombination (HR), an error-free mechanism which primarily occurs during S and G2 phases. The complex (1) mediates the end resection of damaged DNA, which generates proper single-stranded DNA, a key initial steps in HR, and is (2) required for the recruitment of other repair factors and efficient activation of TEL1/ATM and ATR upon DNA damage. The MRN complex possesses single-strand endonuclease activity and double-strand-specific 3'-5' exonuclease activity, which are provided by MRE11, to initiate end resection, which is required for single-strand invasion and recombination. Within the complex, RAD50 is both required to bind DNA ends and hold them in close proximity and regulate the activity of MRE11. RAD50 provides an ATP-dependent control of MRE11 by positioning DNA ends into the MRE11 active site: ATP-binding induces a large structural change from an open form with accessible MRE11 nuclease sites into a closed form. The MRN complex is also required for the processing of R-loops. In Saccharomyces cerevisiae (strain ATCC 204508 / S288c) (Baker's yeast), this protein is DNA repair protein RAD50.